Here is a 499-residue protein sequence, read N- to C-terminus: Serine carboxypeptidase 1 (499 aa).

The signal sequence occupies residues 1-30 (MARCRRRSGCTAGAALLLLLALALSGGGGA). Cystine bridges form between Cys92–Cys388, Cys256–Cys268, and Cys291–Cys355. Asn148 is a glycosylation site (N-linked (GlcNAc...) asparagine). Residue Ser188 is part of the active site. Asn262 carries an N-linked (GlcNAc...) asparagine glycan. Residues 297–351 (IKEVNLQNSKLPQSFKDLGTTNKPFPVRTRMLGRAWPLRAPVKAGRVPSWQEVAS) constitute a propeptide, linker peptide. Residue Asn407 is glycosylated (N-linked (GlcNAc...) asparagine). Residues Asp423 and His476 contribute to the active site. A Microbody targeting signal motif is present at residues 497–499 (SKL).

The protein belongs to the peptidase S10 family. Carboxypeptidase I is a dimer, where each monomer is composed of two chains linked by disulfide bonds. In terms of processing, the linker peptide is endoproteolytically excised during enzyme maturation.

The protein localises to the secreted. The catalysed reaction is Release of a C-terminal amino acid with broad specificity.. In terms of biological role, may be involved in the degradation of small peptides (2-5 residues) or in the degradation of storage proteins in the embryo. This chain is Serine carboxypeptidase 1 (CBP1), found in Hordeum vulgare (Barley).